The following is a 337-amino-acid chain: F420-dependent glucose-6-phosphate dehydrogenase (337 aa).

Aspartate 40 is a binding site for coenzyme F420-(gamma-Glu)n. Histidine 41 serves as the catalytic Proton donor. Coenzyme F420-(gamma-Glu)n is bound by residues threonine 77 and 108–109 (SG). Glutamate 110 serves as the catalytic Proton acceptor. Coenzyme F420-(gamma-Glu)n contacts are provided by residues asparagine 113, 178 to 179 (GG), and 181 to 182 (VV). Residues threonine 196, lysine 199, lysine 260, and arginine 284 each coordinate substrate.

This sequence belongs to the F420-dependent glucose-6-phosphate dehydrogenase family. In terms of assembly, homodimer.

The enzyme catalyses oxidized coenzyme F420-(gamma-L-Glu)(n) + D-glucose 6-phosphate + H(+) = 6-phospho-D-glucono-1,5-lactone + reduced coenzyme F420-(gamma-L-Glu)(n). Its function is as follows. Catalyzes the coenzyme F420-dependent oxidation of glucose 6-phosphate (G6P) to 6-phosphogluconolactone. This Rhodococcus erythropolis (strain PR4 / NBRC 100887) protein is F420-dependent glucose-6-phosphate dehydrogenase.